The sequence spans 207 residues: M-zodatoxin-Lt4a (207 aa).

A signal peptide spans 1–22 (MKFSIIALALAVAFVCVAESRS). Positions 23–43 (EEEGYDVSEEIQAEELEEAER) are excised as a propeptide. Residues 40–43 (EAER) carry the Processing quadruplet motif 1 motif. Q61 is modified (glutamine amide). The Inverted processing quadruplet motif 1 signature appears at 63-66 (REDS). Positions 63-71 (REDSEEAGR) are excised as a propeptide. A Processing quadruplet motif 2 motif is present at residues 68–71 (EAGR). Q89 carries the glutamine amide modification. The Inverted processing quadruplet motif 2 signature appears at 91–94 (REDS). The propeptide occupies 91 to 99 (REDSEEAGR). A Processing quadruplet motif 3 motif is present at residues 96–99 (EAGR). Glutamine amide is present on Q117. The Inverted processing quadruplet motif 3 signature appears at 119-122 (REDS). The propeptide occupies 119-127 (REDSEEAGR). Positions 124-127 (EAGR) match the Processing quadruplet motif 4 motif. Q145 bears the Glutamine amide mark. The Inverted processing quadruplet motif 4 signature appears at 147-150 (REDS). Positions 147–155 (REDSEEAGR) are excised as a propeptide. The short motif at 152–155 (EAGR) is the Processing quadruplet motif 5 element. Glutamine amide is present on Q173. The Inverted processing quadruplet motif 5 motif lies at 175-178 (REDT). The propeptide occupies 175 to 182 (REDTEEAR). Positions 179–182 (EEAR) match the Processing quadruplet motif 6 motif. At F206 the chain carries Phenylalanine amide.

This sequence belongs to the cationic peptide 03 (latarcin) family. 04 subfamily. In terms of processing, cleavage of the propeptide depends on the processing quadruplet motif (PQM) (XXXR, with at least one of X being E) and the inverted PQM (RXXX, with at least one of X being E). Expressed by the venom gland.

It is found in the secreted. Its function is as follows. M-zodatoxin-Lt4a: Has antimicrobial activity against Gram-positive bacteria (A.globiformis VKM Ac-1112 (MIC=0.3 uM), and B.subtilis VKM B-501 (MIC=1.1 uM)), Gram-negative bacteria (E.coli DH5-alpha (MIC=4.5 uM), E.coli MH1 (MIC=3.2 uM), and P.aeruginosa PAO1 (MIC&gt;35 uM)), and yeasts (P.pastoris GS115 (MIC=36 uM), and S.cerevisiae Y190 (MIC=18 uM)). Does not have hemolytic activity against rabbit erythrocytes. Causes paralysis, but is not lethal when injected into insect (M.domestica) larvae. Functionally, shows no antimicrobial activity against Gram-positive bacterium B.subtilis B-501 or Gram-negative bacterium E.coli DH5-alpha at concentrations up to 20 uM. Shows no antimicrobial activity against Gram-positive bacterium B.subtilis B-501 or Gram-negative bacterium E.coli DH5-alpha at concentrations up to 20 uM. Shows no toxicity towards insect (S.carnaria) larvae. The protein is M-zodatoxin-Lt4a of Lachesana tarabaevi (Spider).